The chain runs to 533 residues: Ribonuclease III domain-containing protein RNC1, chloroplastic (533 aa).

The transit peptide at 1 to 30 directs the protein to the chloroplast; that stretch reads MAPPAMAFQALALGPLPLPLPAARRRRRVR. Disordered stretches follow at residues 31–57 and 66–85; these read VLAV…NSPS and RKKA…ILKP. Residues 39 to 53 are compositionally biased toward pro residues; the sequence is TPPPPPSPSSPPEPA. The segment covering 69-82 has biased composition (basic residues); it reads AVSPKKKHPPRRFI. RNase III domains are found at residues 164–279 and 411–511; these read LLYL…LCFG and EHPR…CVYG.

As to quaternary structure, interacts with RNA. Part of large ribonucleo-protein particles that contain CAF1 and/or CAF2.

It is found in the plastid. The protein localises to the chloroplast. Functionally, binds specific group II introns in chloroplasts and facilitates their splicing. Acts on both subgroup IIA and subgroup IIB introns. The substrates of the subgroup II also require the CRM domain proteins CAF1 or CAF2. Binds both single-stranded and double-stranded RNA non-specifically, but lacks endonuclease activity. Required for plastid ribosome biogenesis. In Oryza sativa subsp. japonica (Rice), this protein is Ribonuclease III domain-containing protein RNC1, chloroplastic.